We begin with the raw amino-acid sequence, 242 residues long: Small ribosomal subunit protein uS3 (242 aa).

The KH type-2 domain maps to 39 to 110; that stretch reads IRKFIHKKYG…QVRINVVEVE (72 aa). The interval 216 to 242 is disordered; sequence QTMPVGANPRRRASRRPQQFEDRSNEG. Over residues 233-242 the composition is skewed to basic and acidic residues; that stretch reads QQFEDRSNEG.

The protein belongs to the universal ribosomal protein uS3 family. As to quaternary structure, part of the 30S ribosomal subunit. Forms a tight complex with proteins S10 and S14.

Functionally, binds the lower part of the 30S subunit head. Binds mRNA in the 70S ribosome, positioning it for translation. This is Small ribosomal subunit protein uS3 from Synechococcus sp. (strain CC9902).